The sequence spans 263 residues: NADH dehydrogenase [ubiquinone] iron-sulfur protein 3, mitochondrial (263 aa).

The transit peptide at 1–35 (MAAAAARVWCRGLLGAASVGRGAGRPSVLWQHVRR) directs the protein to the mitochondrion.

This sequence belongs to the complex I 30 kDa subunit family. Core subunit of respiratory chain NADH dehydrogenase (Complex I) which is composed of 45 different subunits. Interacts with NDUFAF3. Interacts with RAB5IF. Found in subcomplexes containing subunits NDUFS2, MT-ND1 and NDUFA13.

Its subcellular location is the mitochondrion inner membrane. The enzyme catalyses a ubiquinone + NADH + 5 H(+)(in) = a ubiquinol + NAD(+) + 4 H(+)(out). Its function is as follows. Core subunit of the mitochondrial membrane respiratory chain NADH dehydrogenase (Complex I) which catalyzes electron transfer from NADH through the respiratory chain, using ubiquinone as an electron acceptor. Essential for the catalytic activity and assembly of complex I. This is NADH dehydrogenase [ubiquinone] iron-sulfur protein 3, mitochondrial (Ndufs3) from Mus musculus (Mouse).